A 122-amino-acid chain; its full sequence is Large ribosomal subunit protein uL18 (122 aa).

This sequence belongs to the universal ribosomal protein uL18 family. Part of the 50S ribosomal subunit; part of the 5S rRNA/L5/L18/L25 subcomplex. Contacts the 5S and 23S rRNAs.

Its function is as follows. This is one of the proteins that bind and probably mediate the attachment of the 5S RNA into the large ribosomal subunit, where it forms part of the central protuberance. This chain is Large ribosomal subunit protein uL18, found in Ruminiclostridium cellulolyticum (strain ATCC 35319 / DSM 5812 / JCM 6584 / H10) (Clostridium cellulolyticum).